The chain runs to 134 residues: Major pollen allergen Lol p 11 (134 aa).

Disulfide bonds link cysteine 14/cysteine 85, cysteine 17/cysteine 127, and cysteine 38/cysteine 73. Asparagine 24 is a glycosylation site (N-linked (GlcNAc...) asparagine).

The protein belongs to the Ole e I family.

It localises to the secreted. The sequence is that of Major pollen allergen Lol p 11 from Lolium perenne (Perennial ryegrass).